The primary structure comprises 453 residues: Bifunctional protein GlmU (453 aa).

The pyrophosphorylase stretch occupies residues 1 to 227 (MTQLSVVILA…LMEVEGANNR (227 aa)). UDP-N-acetyl-alpha-D-glucosamine contacts are provided by residues 9–12 (LAAG), Lys-23, Gln-74, 79–80 (GT), 101–103 (YGD), Gly-138, Glu-152, Asn-167, and Asn-225. Asp-103 lines the Mg(2+) pocket. Asn-225 serves as a coordination point for Mg(2+). Residues 228–248 (LQLAALERYYQKIQAEKLLLA) form a linker region. The segment at 249–453 (GVTIIDPARF…IQGWQRPTKK (205 aa)) is N-acetyltransferase. UDP-N-acetyl-alpha-D-glucosamine is bound by residues Arg-331 and Lys-349. His-361 serves as the catalytic Proton acceptor. UDP-N-acetyl-alpha-D-glucosamine contacts are provided by Tyr-364 and Asn-375. Residues Ala-378, 384–385 (NY), Ser-403, Ala-421, and Arg-438 each bind acetyl-CoA.

It in the N-terminal section; belongs to the N-acetylglucosamine-1-phosphate uridyltransferase family. This sequence in the C-terminal section; belongs to the transferase hexapeptide repeat family. In terms of assembly, homotrimer. Mg(2+) is required as a cofactor.

The protein resides in the cytoplasm. The catalysed reaction is alpha-D-glucosamine 1-phosphate + acetyl-CoA = N-acetyl-alpha-D-glucosamine 1-phosphate + CoA + H(+). The enzyme catalyses N-acetyl-alpha-D-glucosamine 1-phosphate + UTP + H(+) = UDP-N-acetyl-alpha-D-glucosamine + diphosphate. The protein operates within nucleotide-sugar biosynthesis; UDP-N-acetyl-alpha-D-glucosamine biosynthesis; N-acetyl-alpha-D-glucosamine 1-phosphate from alpha-D-glucosamine 6-phosphate (route II): step 2/2. It functions in the pathway nucleotide-sugar biosynthesis; UDP-N-acetyl-alpha-D-glucosamine biosynthesis; UDP-N-acetyl-alpha-D-glucosamine from N-acetyl-alpha-D-glucosamine 1-phosphate: step 1/1. Its pathway is bacterial outer membrane biogenesis; LPS lipid A biosynthesis. Its function is as follows. Catalyzes the last two sequential reactions in the de novo biosynthetic pathway for UDP-N-acetylglucosamine (UDP-GlcNAc). The C-terminal domain catalyzes the transfer of acetyl group from acetyl coenzyme A to glucosamine-1-phosphate (GlcN-1-P) to produce N-acetylglucosamine-1-phosphate (GlcNAc-1-P), which is converted into UDP-GlcNAc by the transfer of uridine 5-monophosphate (from uridine 5-triphosphate), a reaction catalyzed by the N-terminal domain. In Glaesserella parasuis serovar 5 (strain SH0165) (Haemophilus parasuis), this protein is Bifunctional protein GlmU.